The sequence spans 536 residues: Bifunctional purine biosynthesis protein PurH (536 aa).

The MGS-like domain occupies 8–158 (IPAPDEVRIK…KNHAYVTIVT (151 aa)).

It belongs to the PurH family.

The catalysed reaction is (6R)-10-formyltetrahydrofolate + 5-amino-1-(5-phospho-beta-D-ribosyl)imidazole-4-carboxamide = 5-formamido-1-(5-phospho-D-ribosyl)imidazole-4-carboxamide + (6S)-5,6,7,8-tetrahydrofolate. It catalyses the reaction IMP + H2O = 5-formamido-1-(5-phospho-D-ribosyl)imidazole-4-carboxamide. It participates in purine metabolism; IMP biosynthesis via de novo pathway; 5-formamido-1-(5-phospho-D-ribosyl)imidazole-4-carboxamide from 5-amino-1-(5-phospho-D-ribosyl)imidazole-4-carboxamide (10-formyl THF route): step 1/1. The protein operates within purine metabolism; IMP biosynthesis via de novo pathway; IMP from 5-formamido-1-(5-phospho-D-ribosyl)imidazole-4-carboxamide: step 1/1. The sequence is that of Bifunctional purine biosynthesis protein PurH from Rhizobium meliloti (strain 1021) (Ensifer meliloti).